Here is a 688-residue protein sequence, read N- to C-terminus: Glycine--tRNA ligase beta subunit (688 aa).

This sequence belongs to the class-II aminoacyl-tRNA synthetase family. In terms of assembly, tetramer of two alpha and two beta subunits.

It localises to the cytoplasm. It catalyses the reaction tRNA(Gly) + glycine + ATP = glycyl-tRNA(Gly) + AMP + diphosphate. The sequence is that of Glycine--tRNA ligase beta subunit from Haemophilus influenzae (strain PittEE).